Consider the following 270-residue polypeptide: Regulatory protein RecX (270 aa).

This sequence belongs to the RecX family.

It localises to the cytoplasm. Its function is as follows. Modulates RecA activity. This chain is Regulatory protein RecX, found in Bacillus cereus (strain B4264).